The sequence spans 407 residues: Glucan 1,3-beta-glucosidase 1 (407 aa).

The N-terminal stretch at 1-22 (MLSFTSVFSFFLHALLLKTAFS) is a signal peptide. E213 serves as the catalytic Proton donor. C295 and C406 form a disulfide bridge. Residue E312 is the Nucleophile of the active site.

It belongs to the glycosyl hydrolase 5 (cellulase A) family.

Its subcellular location is the secreted. It catalyses the reaction Successive hydrolysis of beta-D-glucose units from the non-reducing ends of (1-&gt;3)-beta-D-glucans, releasing alpha-glucose.. Its function is as follows. Beta-glucanases participate in the metabolism of beta-glucan, the main structural component of the cell wall. It could also function biosynthetically as a transglycosylase. This Schizosaccharomyces pombe (strain 972 / ATCC 24843) (Fission yeast) protein is Glucan 1,3-beta-glucosidase 1 (exg1).